Reading from the N-terminus, the 830-residue chain is Leucine--tRNA ligase (830 aa).

The short motif at P34–H44 is the 'HIGH' region element. The 'KMSKS' region signature appears at K592 to S596. K595 provides a ligand contact to ATP.

This sequence belongs to the class-I aminoacyl-tRNA synthetase family.

It localises to the cytoplasm. The catalysed reaction is tRNA(Leu) + L-leucine + ATP = L-leucyl-tRNA(Leu) + AMP + diphosphate. This is Leucine--tRNA ligase from Ehrlichia ruminantium (strain Gardel).